A 316-amino-acid polypeptide reads, in one-letter code: Elongation factor Ts, mitochondrial (316 aa).

The N-terminal 18 residues, 1–18, are a transit peptide targeting the mitochondrion; that stretch reads MFARAPFVRLLSTTSRNL. Residues 245-269 form a disordered region; it reads EAAESVKTQEGLRSQEGHDPNADPV.

This sequence belongs to the EF-Ts family.

It is found in the mitochondrion. Functionally, associates with the EF-Tu.GDP complex and induces the exchange of GDP to GTP. It remains bound to the aminoacyl-tRNA.EF-Tu.GTP complex up to the GTP hydrolysis stage on the ribosome. The polypeptide is Elongation factor Ts, mitochondrial (Caenorhabditis elegans).